Consider the following 353-residue polypeptide: Photosystem II protein D1 (353 aa).

N-acetylthreonine is present on threonine 2. Threonine 2 is subject to Phosphothreonine. Helical transmembrane passes span 29-46, 118-133, and 142-156; these read YIGWFGVLMIPTLLTATS, HFLLGVACYMGREWEL, and WIAVAYSAPVAAATA. Residue histidine 118 participates in chlorophyll a binding. Tyrosine 126 is a pheophytin a binding site. [CaMn4O5] cluster-binding residues include aspartate 170 and glutamate 189. A helical membrane pass occupies residues 197–218; it reads FHMLGVAGVFGGSLFSAMHGSL. Chlorophyll a is bound at residue histidine 198. A quinone contacts are provided by residues histidine 215 and 264 to 265; that span reads SF. Residue histidine 215 coordinates Fe cation. Residue histidine 272 coordinates Fe cation. The chain crosses the membrane as a helical span at residues 274-288; sequence FLAAWPVVGIWFTAL. 4 residues coordinate [CaMn4O5] cluster: histidine 332, glutamate 333, aspartate 342, and alanine 344. Positions 345–353 are excised as a propeptide; that stretch reads AVEVPSING.

The protein belongs to the reaction center PufL/M/PsbA/D family. In terms of assembly, PSII is composed of 1 copy each of membrane proteins PsbA, PsbB, PsbC, PsbD, PsbE, PsbF, PsbH, PsbI, PsbJ, PsbK, PsbL, PsbM, PsbT, PsbX, PsbY, PsbZ, Psb30/Ycf12, at least 3 peripheral proteins of the oxygen-evolving complex and a large number of cofactors. It forms dimeric complexes. The D1/D2 heterodimer binds P680, chlorophylls that are the primary electron donor of PSII, and subsequent electron acceptors. It shares a non-heme iron and each subunit binds pheophytin, quinone, additional chlorophylls, carotenoids and lipids. D1 provides most of the ligands for the Mn4-Ca-O5 cluster of the oxygen-evolving complex (OEC). There is also a Cl(-1) ion associated with D1 and D2, which is required for oxygen evolution. The PSII complex binds additional chlorophylls, carotenoids and specific lipids. is required as a cofactor. Tyr-161 forms a radical intermediate that is referred to as redox-active TyrZ, YZ or Y-Z. Post-translationally, C-terminally processed by CTPA; processing is essential to allow assembly of the oxygen-evolving complex and thus photosynthetic growth.

The protein localises to the plastid. It localises to the chloroplast thylakoid membrane. The catalysed reaction is 2 a plastoquinone + 4 hnu + 2 H2O = 2 a plastoquinol + O2. Its function is as follows. Photosystem II (PSII) is a light-driven water:plastoquinone oxidoreductase that uses light energy to abstract electrons from H(2)O, generating O(2) and a proton gradient subsequently used for ATP formation. It consists of a core antenna complex that captures photons, and an electron transfer chain that converts photonic excitation into a charge separation. The D1/D2 (PsbA/PsbD) reaction center heterodimer binds P680, the primary electron donor of PSII as well as several subsequent electron acceptors. The protein is Photosystem II protein D1 of Triticum aestivum (Wheat).